The chain runs to 225 residues: Transmembrane emp24 domain-containing protein p24delta11 (225 aa).

Residues 1 to 35 form the signal peptide; that stretch reads MDLLPSRYKIHKTKLRWILTMMTMMMMMVMRRGES. Residues 36–193 lie on the Lumenal side of the membrane; that stretch reads MRLDMESGNT…ELNRSTNSRM (158 aa). The region spanning 45-160 is the GOLD domain; sequence TKCISDDIKT…ITMLEVEVRK (116 aa). Residues 175 to 188 are a coiled coil; sequence LIEREREMQELNRS. Arg-178 carries the post-translational modification Omega-N-methylated arginine. The N-linked (GlcNAc...) asparagine glycan is linked to Asn-186. Residues 194-210 traverse the membrane as a helical segment; it reads AALSLLSFVVTMSVAGL. The Cytoplasmic segment spans residues 211–225; that stretch reads QLRHLKSFLERKKLL. Positions 218–219 match the COPII vesicle coat-binding motif; the sequence is FL. The COPI vesicle coat-binding signature appears at 218–225; that stretch reads FLERKKLL.

The protein belongs to the EMP24/GP25L family. In terms of assembly, probably oligomerizes with other members of the EMP24/GP25L family. Associates with the COPI vesicle coat (coatomer). Associates with the COPII vesicle coat (coatomer).

The protein localises to the endoplasmic reticulum membrane. It is found in the golgi apparatus. The protein resides in the cis-Golgi network membrane. It localises to the golgi stack membrane. Functionally, involved in vesicular protein trafficking. Mainly functions in the early secretory pathway. Thought to act as cargo receptor at the lumenal side for incorporation of secretory cargo molecules into transport vesicles and to be involved in vesicle coat formation at the cytoplasmic side. This chain is Transmembrane emp24 domain-containing protein p24delta11, found in Arabidopsis thaliana (Mouse-ear cress).